A 126-amino-acid polypeptide reads, in one-letter code: Large ribosomal subunit protein eL8 (126 aa).

It belongs to the eukaryotic ribosomal protein eL8 family. As to quaternary structure, part of the 50S ribosomal subunit. Probably part of the RNase P complex.

The protein localises to the cytoplasm. Functionally, multifunctional RNA-binding protein that recognizes the K-turn motif in ribosomal RNA, the RNA component of RNase P, box H/ACA, box C/D and box C'/D' sRNAs. This Cenarchaeum symbiosum (strain A) protein is Large ribosomal subunit protein eL8.